A 623-amino-acid chain; its full sequence is Activator of C kinase protein 1 (623 aa).

The interval 141–230 (KESLGSPAVQ…GSSGGEDKLS (90 aa)) is disordered. Over residues 152–161 (ASISSGNRIS) the composition is skewed to polar residues. A compositionally biased stretch (basic and acidic residues) spans 176 to 193 (SESRILQEKVYRTEEKAP). Residues Lys184 and Lys191 each participate in a glycyl lysine isopeptide (Lys-Gly) (interchain with G-Cter in ubiquitin) cross-link. Residues 206-215 (KINQPPTGSA) are compositionally biased toward polar residues. Sel1-like repeat units lie at residues 318 to 361 (PPAM…KLNN), 408 to 444 (SACMYKLGMSHLYGLNMQKTDVLLAIKWFDKAAQKGD), 495 to 531 (PLAQWKLGNCYEFGDLGLPVVAKKSIYWYSKAAAAQP), and 576 to 611 (ARTEFALGFYYEKGVGCEVDLDLAKQYYQRAARMGF).

The protein is Activator of C kinase protein 1 (ACK1) of Saccharomyces cerevisiae (strain ATCC 204508 / S288c) (Baker's yeast).